Reading from the N-terminus, the 477-residue chain is Probable cytosolic Fe-S cluster assembly factor GK14772 (477 aa).

Residues Cys-23, Cys-69, Cys-72, Cys-75, Cys-188, Cys-244, Cys-396, and Cys-400 each coordinate [4Fe-4S] cluster.

It belongs to the NARF family.

Component of the cytosolic iron-sulfur (Fe/S) protein assembly machinery. Required for maturation of extramitochondrial Fe/S proteins. The sequence is that of Probable cytosolic Fe-S cluster assembly factor GK14772 from Drosophila willistoni (Fruit fly).